The primary structure comprises 177 residues: Large ribosomal subunit protein uL6 (177 aa).

The protein belongs to the universal ribosomal protein uL6 family. Part of the 50S ribosomal subunit.

In terms of biological role, this protein binds to the 23S rRNA, and is important in its secondary structure. It is located near the subunit interface in the base of the L7/L12 stalk, and near the tRNA binding site of the peptidyltransferase center. This chain is Large ribosomal subunit protein uL6, found in Shewanella frigidimarina (strain NCIMB 400).